A 339-amino-acid polypeptide reads, in one-letter code: 4-amino-5-hydroxymethyl-2-methylpyrimidine phosphate synthase (339 aa).

N6-(pyridoxal phosphate)lysine is present on Lys-62. The active site involves His-66. Position 115–118 (115–118 (GEFG)) interacts with pyridoxal 5'-phosphate. A CCCFC; essential for catalytic activity, may be the site of iron coordination motif is present at residues 195–199 (CCCFC).

Belongs to the NMT1/THI5 family. In terms of assembly, homodimer. Fe(3+) is required as a cofactor.

The catalysed reaction is N(6)-(pyridoxal phosphate)-L-lysyl-[4-amino-5-hydroxymethyl-2-methylpyrimidine phosphate synthase] + L-histidyl-[4-amino-5-hydroxymethyl-2-methylpyrimidine phosphate synthase] + 2 Fe(3+) + 4 H2O = L-lysyl-[4-amino-5-hydroxymethyl-2-methylpyrimidine phosphate synthase] + (2S)-2-amino-5-hydroxy-4-oxopentanoyl-[4-amino-5-hydroxymethyl-2-methylpyrimidine phosphate synthase] + 4-amino-2-methyl-5-(phosphooxymethyl)pyrimidine + 3-oxopropanoate + 2 Fe(2+) + 2 H(+). It functions in the pathway cofactor biosynthesis; thiamine diphosphate biosynthesis. Responsible for the formation of the pyrimidine heterocycle in the thiamine biosynthesis pathway. Catalyzes the formation of hydroxymethylpyrimidine phosphate (HMP-P) from histidine and pyridoxal phosphate (PLP). The protein uses PLP and the active site histidine to form HMP-P, generating an inactive enzyme. The enzyme can only undergo a single turnover, which suggests it is a suicide enzyme. The polypeptide is 4-amino-5-hydroxymethyl-2-methylpyrimidine phosphate synthase (Candida albicans (strain WO-1) (Yeast)).